Consider the following 296-residue polypeptide: GTPase Era (296 aa).

The 170-residue stretch at 2-171 folds into the Era-type G domain; the sequence is KAGFIAVVGR…LEALDPYLED (170 aa). The G1 stretch occupies residues 10-17; it reads GRPNVGKS. GTP is bound at residue 10–17; sequence GRPNVGKS. The tract at residues 36–40 is G2; the sequence is GTTRD. The G3 stretch occupies residues 57-60; the sequence is DTPG. GTP-binding positions include 57 to 61 and 120 to 123; these read DTPGI and NKVD. The G4 stretch occupies residues 120–123; sequence NKVD. The segment at 150–152 is G5; sequence ASG. The 78-residue stretch at 202-279 folds into the KH type-2 domain; it reads TRDEIPHSVA…YLGLWVKVKD (78 aa).

The protein belongs to the TRAFAC class TrmE-Era-EngA-EngB-Septin-like GTPase superfamily. Era GTPase family. In terms of assembly, monomer.

It is found in the cytoplasm. The protein localises to the cell inner membrane. In terms of biological role, an essential GTPase that binds both GDP and GTP, with rapid nucleotide exchange. Plays a role in 16S rRNA processing and 30S ribosomal subunit biogenesis and possibly also in cell cycle regulation and energy metabolism. The sequence is that of GTPase Era from Fusobacterium nucleatum subsp. nucleatum (strain ATCC 25586 / DSM 15643 / BCRC 10681 / CIP 101130 / JCM 8532 / KCTC 2640 / LMG 13131 / VPI 4355).